The sequence spans 92 residues: Acylphosphatase (92 aa).

Residues 5 to 92 (CIAAYVYGVV…TPFETFKIRY (88 aa)) enclose the Acylphosphatase-like domain. Catalysis depends on residues Arg-20 and Asn-38.

The protein belongs to the acylphosphatase family.

It catalyses the reaction an acyl phosphate + H2O = a carboxylate + phosphate + H(+). In Yersinia enterocolitica serotype O:8 / biotype 1B (strain NCTC 13174 / 8081), this protein is Acylphosphatase (acyP).